Here is a 224-residue protein sequence, read N- to C-terminus: MDEILARAGIFQGVEPSAIAALTKQLQPVDFPRGHTVFAEGEPGDRLYIIISGKVKIGRRAPDGRENLLTIMGPSDMFGELSIFDPGPRTSSATTITEVRAVSMDRDALRSWIADRPEISEQLLRVLARRLRRTNNNLADLIFTDVPGRVAKQLLQLAQRFGTQEGGALRVTHDLTQEEIAQLVGASRETVNKALADFAHRGWIRLEGKSVLISDSERLARRAR.

3',5'-cyclic AMP-binding positions include 64–70 (GRENLLT), 79–82 (GELS), 89–90 (RT), 134–135 (TN), 142–143 (IF), and 178–188 (EEIAQLVGASR). Residues 144–217 (TDVPGRVAKQ…GKSVLISDSE (74 aa)) form the HTH crp-type domain. Residues 177–196 (QEEIAQLVGASRETVNKALA) constitute a DNA-binding region (H-T-H motif).

Homodimer.

Its function is as follows. Global transcriptional regulator that complexes with cAMP and binds to specific DNA promoter sites, causing DNA-bending, to regulate transcription. cAMP improves binding to specific DNA sequences, probably by altering protein conformation. Activates expression of whiB1. The protein is CRP-like cAMP-activated global transcriptional regulator of Mycobacterium tuberculosis (strain CDC 1551 / Oshkosh).